An 878-amino-acid chain; its full sequence is Probable ATP-dependent RNA helicase ddx10 (878 aa).

A compositionally biased stretch (basic and acidic residues) spans 1-15; sequence MNKDKSKQKPQKKEN. Disordered stretches follow at residues 1 to 53 and 102 to 130; these read MNKD…IDKV and RGTNPLANISSTTATTTTTTATKNDKEKE. Residues 16-30 are compositionally biased toward low complexity; that stretch reads NNNNNKNNNNNNNKT. Residues 31-53 are compositionally biased toward basic and acidic residues; it reads ENNKTNKDFTKNKFDKDAKIDKV. The span at 102–112 shows a compositional bias: polar residues; it reads RGTNPLANISS. A compositionally biased stretch (low complexity) spans 113 to 123; the sequence is TTATTTTTTAT. A Q motif motif is present at residues 141–169; the sequence is TDFKDLPISQLTLKALTESKFLKLTDIQR. ATP-binding positions include 161–163, Q168, and 185–192; these read FLK and AKTGSGKT. In terms of domain architecture, Helicase ATP-binding spans 172 to 346; the sequence is LPHTLCGRDI…RLSLQEPEYI (175 aa). Positions 294-297 match the DEAD box motif; sequence DEAD. Residues 372–521 enclose the Helicase C-terminal domain; the sequence is KLNMLFSFIK…ILEPNPEKLV (150 aa). The span at 608–618 shows a compositional bias: basic and acidic residues; sequence DKKSKGEKDID. Disordered regions lie at residues 608–675 and 781–878; these read DKKS…RKNA and LQSK…KNRI. A compositionally biased stretch (acidic residues) spans 635-652; sequence SDDEDSEDDSDFQDDSDD. The segment covering 665-674 has biased composition (basic and acidic residues); sequence NIEKLFDRKN. The segment covering 816-850 has biased composition (acidic residues); it reads ENGENDSDDESNDDDVWGQEYNSDDDDDDEESESE. Basic and acidic residues predominate over residues 860-869; the sequence is RTLEDHEESA.

The protein belongs to the DEAD box helicase family. DDX10/DBP4 subfamily.

Its subcellular location is the nucleus. It localises to the nucleolus. The catalysed reaction is ATP + H2O = ADP + phosphate + H(+). Probable ATP-dependent RNA helicase which may be involved in ribosome biogenesis. This Dictyostelium discoideum (Social amoeba) protein is Probable ATP-dependent RNA helicase ddx10 (ddx10).